We begin with the raw amino-acid sequence, 643 residues long: Phosphatidylinositol-3,5-bisphosphate 3-phosphatase MTMR2 (643 aa).

Residues 1-52 (MEKSSSCESLGAQLPAARLPSEDSLSSASTSHSENSVHTKSASAISSDSIST) form a disordered region. Ser6 and Ser9 each carry phosphoserine. Residues 23-40 (DSLSSASTSHSENSVHTK) are compositionally biased toward polar residues. A compositionally biased stretch (low complexity) spans 41-52 (SASAISSDSIST). Ser58 bears the Phosphoserine mark. Positions 68 to 139 (NKLAEMEEPA…GVISRVEKIG (72 aa)) constitute a GRAM domain. The region spanning 205-580 (GWKLYDPLLE…RHLELWVGYY (376 aa)) is the Myotubularin phosphatase domain. Residues Asn330, Asn355, and Ile356 each coordinate a 1,2-diacyl-sn-glycero-3-phospho-(1D-myo-inositol-3,5-bisphosphate). Residues Asn330, Asn355, and Ile356 each contribute to the a 1,2-diacyl-sn-glycero-3-phospho-(1D-myo-inositol-3-phosphate) site. Catalysis depends on Cys417, which acts as the Phosphocysteine intermediate. A 1,2-diacyl-sn-glycero-3-phospho-(1D-myo-inositol-3,5-bisphosphate) contacts are provided by Ser418, Asp419, Gly420, Trp421, Asp422, Arg423, Arg459, and Arg463. Residues Ser418, Asp419, Gly420, Trp421, Asp422, and Arg423 each contribute to the a 1,2-diacyl-sn-glycero-3-phospho-(1D-myo-inositol-3-phosphate) site. Arg463 is an a 1,2-diacyl-sn-glycero-3-phospho-(1D-myo-inositol-3-phosphate) binding site. The stretch at 593 to 627 (IHSRYKELLAKRAELQRKVEELQREISNRSTSSSE) forms a coiled coil. The disordered stretch occupies residues 614-643 (LQREISNRSTSSSERASSPAQCVTPVQTVV). Low complexity predominate over residues 620-631 (NRSTSSSERASS). Over residues 632-643 (PAQCVTPVQTVV) the composition is skewed to polar residues.

Belongs to the protein-tyrosine phosphatase family. Non-receptor class myotubularin subfamily. Homodimer (via coiled-coil domain). Heterotetramer consisting of one MTMR2 dimer and one SBF2/MTMR13 dimer; specifically in peripheral nerves stabilizes SBF2/MTMR13 at the membranes and increases MTMR2 catalytic activity towards phosphatidylinositol 3,5-bisphosphate and to a lesser extent towards phosphatidylinositol 3-phosphate. Heterodimer with SBF1/MTMR5; acts as an adapter for the phosphatase MTMR2 to regulate MTMR2 catalytic activity and subcellular location. Heterodimer with MTMR12. Post-translationally, phosphorylation at Ser-58 decreases MTMR2 localization to endocytic vesicular structures. As to expression, expressed in sciatic nerve and in Schwann cells (at protein level). Detected in adult dorsal root ganglia, neurons of the central nervous system, motor neurons, cell soma and neurites of sensory neurons, olfactory bulb, cerebellum and hippocampus.

Its subcellular location is the cytoplasm. It is found in the early endosome membrane. The protein resides in the perinuclear region. The protein localises to the cell projection. It localises to the axon. Its subcellular location is the endosome membrane. The catalysed reaction is a 1,2-diacyl-sn-glycero-3-phospho-(1D-myo-inositol-3,5-bisphosphate) + H2O = a 1,2-diacyl-sn-glycero-3-phospho-(1D-myo-inositol-5-phosphate) + phosphate. The enzyme catalyses a 1,2-diacyl-sn-glycero-3-phospho-(1D-myo-inositol-3-phosphate) + H2O = a 1,2-diacyl-sn-glycero-3-phospho-(1D-myo-inositol) + phosphate. It carries out the reaction 1,2-dioctanoyl-sn-glycero-3-phospho-(1-D-myo-inositol-3-phosphate) + H2O = 1,2-dioctanoyl-sn-glycero-3-phospho-(1D-myo-inositol) + phosphate. It catalyses the reaction 1,2-dioctanoyl-sn-glycero-3-phospho-(1D-myo-inositol-3,5-bisphosphate) + H2O = 1,2-dioctanoyl-sn-glycero-3-phospho-(1D-myo-inositol-5-phosphate) + phosphate. Lipid phosphatase that specifically dephosphorylates the D-3 position of phosphatidylinositol 3-phosphate and phosphatidylinositol 3,5-bisphosphate, generating phosphatidylinositol and phosphatidylinositol 5-phosphate. Regulates the level of these phosphoinositides critical for various biological processes including autophagy initiation and autophagosome maturation. In Mus musculus (Mouse), this protein is Phosphatidylinositol-3,5-bisphosphate 3-phosphatase MTMR2.